Consider the following 103-residue polypeptide: Thioredoxin-1 (103 aa).

The region spanning 2 to 103 (VTQFKTASEF…AIKQAIAANA (102 aa)) is the Thioredoxin domain. Active-site nucleophile residues include Cys-30 and Cys-33. A disulfide bridge links Cys-30 with Cys-33. Residues Lys-54, Lys-66, and Lys-96 each participate in a glycyl lysine isopeptide (Lys-Gly) (interchain with G-Cter in ubiquitin) cross-link.

The protein belongs to the thioredoxin family. In terms of assembly, monomer. Part of the heterodimeric LMA1 complex together with the proteinase inhibitor PBI2. Most of the thioredoxin of yeast is in this complex rather than the well-studied monomer. LMA1 binds to the ATPase SEC18. Reversible disulfide bond formation between Cys-30 and Cys-33, reverted by thioredoxin reductase TRR1 using NADPH as hydrogen donor.

It localises to the nucleus. It is found in the cytoplasm. Its subcellular location is the golgi apparatus membrane. The protein localises to the mitochondrion intermembrane space. In terms of biological role, participates as a hydrogen donor in redox reactions through the reversible oxidation of its active center dithiol to a disulfide, accompanied by the transfer of 2 electrons and 2 protons. It is involved in many cellular processes, including deoxyribonucleotide synthesis, repair of oxidatively damaged proteins, protein folding, sulfur metabolism, and redox homeostasis. Thioredoxin-dependent enzymes include phosphoadenosine-phosphosulfate reductase MET16, alkyl-hydroperoxide reductase DOT5, thioredoxin peroxidases TSA1 and TSA2, alkyl hydroperoxide reductase AHP1, and peroxiredoxin HYR1. Thioredoxin is also involved in protection against reducing stress. As part of the LMA1 complex, it is involved in the facilitation of vesicle fusion such as homotypic vacuole and ER-derived COPII vesicle fusion with the Golgi. This activity does not require the redox mechanism. The polypeptide is Thioredoxin-1 (TRX1) (Saccharomyces cerevisiae (strain ATCC 204508 / S288c) (Baker's yeast)).